The chain runs to 211 residues: Arginine exporter protein ArgO (211 aa).

A run of 6 helical transmembrane segments spans residues 1–21, 37–57, 68–88, 111–131, 147–167, and 179–199; these read MISY…PLGP, LMIA…GIFG, LLAL…FGAL, IIAT…DTFV, WFAL…ALLA, and AQRI…FQLA.

It belongs to the LysE/ArgO transporter (TC 2.A.75) family.

The protein localises to the cell inner membrane. The enzyme catalyses L-arginine(in) = L-arginine(out). In terms of biological role, involved in the export of arginine. Important to control the intracellular level of arginine and the correct balance between arginine and lysine. This is Arginine exporter protein ArgO from Salmonella typhimurium (strain LT2 / SGSC1412 / ATCC 700720).